Here is a 224-residue protein sequence, read N- to C-terminus: Uracil-DNA glycosylase (224 aa).

Catalysis depends on Asp64, which acts as the Proton acceptor.

The protein belongs to the uracil-DNA glycosylase (UDG) superfamily. UNG family.

It localises to the cytoplasm. The enzyme catalyses Hydrolyzes single-stranded DNA or mismatched double-stranded DNA and polynucleotides, releasing free uracil.. Its function is as follows. Excises uracil residues from the DNA which can arise as a result of misincorporation of dUMP residues by DNA polymerase or due to deamination of cytosine. The sequence is that of Uracil-DNA glycosylase from Clostridioides difficile (strain 630) (Peptoclostridium difficile).